The chain runs to 307 residues: MADHLYARKNDALNVNPDIVNGQRSDINITVRGSDWYWAVCAVMTVSTFAFLGLGMRKPRTDRIFHYITAGITMIASIAYFTMASNLGWTPIAVEFQRSNHRVAGIYREIFYARYIDWFLTTPLLLTDLLLTAGMPWPTVLWVILVDWVMIVTGLVGALVKSSYKWGYFAFGCAALAYIVYVLAWEARLHAKHVGPDVGRTFVMCGSLTAVVWILYPIAWGVCEGGNLIAPDSEAVFYGILDLIAKPVFGALLLWGHRNIDPARLGLRIRDIDERIFPDGPNNKVASGHGARNDTATASGSNVNPNA.

N-linked (GlcNAc...) asparagine glycosylation is present at asparagine 28. 7 helical membrane passes run 36-56 (WYWAVCAVMTVSTFAFLGLGM), 64-84 (IFHYITAGITMIASIAYFTMA), 118-138 (WFLTTPLLLTDLLLTAGMPWP), 140-160 (VLWVILVDWVMIVTGLVGALV), 166-186 (WGYFAFGCAALAYIVYVLAWE), 202-222 (FVMCGSLTAVVWILYPIAWGV), and 235-255 (AVFYGILDLIAKPVFGALLLW). Positions 280–307 (GPNNKVASGHGARNDTATASGSNVNPNA) are disordered. N-linked (GlcNAc...) asparagine glycosylation is present at asparagine 293. Over residues 294–307 (DTATASGSNVNPNA) the composition is skewed to polar residues.

The protein belongs to the archaeal/bacterial/fungal opsin family.

The protein resides in the membrane. In terms of biological role, opsin-like protein; part of the car gene cluster that mediates the biosynthesis of neurosporaxanthin, a carboxylic apocarotenoid acting as an essential protective pigment and leading to orange pigmentation. The exact role of carO in carotenoid biosynthesis is not known yet, but it could be involved in the regulation of the pathway by light or other stimuli. This Fusarium fujikuroi (Bakanae and foot rot disease fungus) protein is Opsin-like protein carO.